The following is a 190-amino-acid chain: Recombination protein RecR (190 aa).

A C4-type zinc finger spans residues 58–73; that stretch reads CTQCGGLSEDELCYIC. A Toprim domain is found at 81-167; sequence SSLCLVESAR…HFTKIAQGVP (87 aa).

Belongs to the RecR family.

Functionally, may play a role in DNA repair. It seems to be involved in an RecBC-independent recombinational process of DNA repair. It may act with RecF and RecO. The protein is Recombination protein RecR of Nitratiruptor sp. (strain SB155-2).